Consider the following 82-residue polypeptide: Putative membrane protein insertion efficiency factor (82 aa).

Belongs to the UPF0161 family.

The protein localises to the cell membrane. In terms of biological role, could be involved in insertion of integral membrane proteins into the membrane. The sequence is that of Putative membrane protein insertion efficiency factor from Streptococcus uberis (strain ATCC BAA-854 / 0140J).